A 388-amino-acid polypeptide reads, in one-letter code: Chaperone protein DnaJ (388 aa).

The J domain occupies 5 to 70; it reads DYYEVLGVAR…QKRAAYDRFG (66 aa). The CR-type zinc-finger motif lies at 141 to 219; sequence GKTETIRLPT…CGGAGRVTRE (79 aa). The Zn(2+) site is built by C154, C157, C171, C174, C193, C196, C207, and C210. CXXCXGXG motif repeat units lie at residues 154–161, 171–178, 193–200, and 207–214; these read CEVCAGSG, CPTCGGYG, CPNCHGRG, and CTACGGAG.

It belongs to the DnaJ family. As to quaternary structure, homodimer. Zn(2+) serves as cofactor.

It is found in the cytoplasm. Participates actively in the response to hyperosmotic and heat shock by preventing the aggregation of stress-denatured proteins and by disaggregating proteins, also in an autonomous, DnaK-independent fashion. Unfolded proteins bind initially to DnaJ; upon interaction with the DnaJ-bound protein, DnaK hydrolyzes its bound ATP, resulting in the formation of a stable complex. GrpE releases ADP from DnaK; ATP binding to DnaK triggers the release of the substrate protein, thus completing the reaction cycle. Several rounds of ATP-dependent interactions between DnaJ, DnaK and GrpE are required for fully efficient folding. Also involved, together with DnaK and GrpE, in the DNA replication of plasmids through activation of initiation proteins. The sequence is that of Chaperone protein DnaJ from Methylobacterium nodulans (strain LMG 21967 / CNCM I-2342 / ORS 2060).